Reading from the N-terminus, the 110-residue chain is uncharacterized protein (110 aa).

The protein resides in the plastid. It is found in the chloroplast. This is an uncharacterized protein from Auxenochlorella pyrenoidosa (Freshwater green alga).